A 568-amino-acid chain; its full sequence is Alpha-1,3-galactosidase A (568 aa).

Positions 1 to 17 (MMSVWFIQLAIFAQSRI) are cleaved as a signal peptide. PbH1 repeat units follow at residues 87–125 (LYLNTLKNITIDGCGSTLLMNGEMTSFVLDKCEGIVLKN), 243–265 (SKGILLENINFYYLGNFGVVCQY), 299–321 (RGMIDIKNSRFIGAHDDPINIHG), 409–431 (TPEVRITNNYFARVPTRGILITT), 432–454 (RRKSLIEGNTFYGMQMSGIFVAD), and 465–486 (VHDLTIRQNTFLNCGEPIISID).

It belongs to the glycosyl hydrolase 110 family. A subfamily.

The catalysed reaction is Hydrolysis of terminal, non-reducing branched (1-&gt;3)-alpha-D-galactosidic residues, producing free D-galactose.. It carries out the reaction Hydrolysis of terminal, non-reducing alpha-D-galactose residues in alpha-D-galactosides, including galactose oligosaccharides, galactomannans and galactolipids.. Its function is as follows. Alpha-galactosidase that specifically removes branched alpha-1,3-linked galactose residues present in blood group B antigens. Has no activity toward linear alpha-1,3-linked galactose residues. The chain is Alpha-1,3-galactosidase A (glaA) from Bacteroides thetaiotaomicron (strain ATCC 29148 / DSM 2079 / JCM 5827 / CCUG 10774 / NCTC 10582 / VPI-5482 / E50).